Consider the following 523-residue polypeptide: Excitatory amino acid transporter 3 (523 aa).

At 1 to 18 (MGKPTSSGCDWRRFLRNH) the chain is on the cytoplasmic side. A helical transmembrane segment spans residues 19–38 (WLLLSTVAAVVLGIVLGVVV). Over 39-61 (RGHSELSNLDKFYFAFPGEILMR) the chain is Extracellular. Residues 62–82 (MLKLVILPLIVSSMITGVAAL) form a helical membrane-spanning segment. Topologically, residues 83–93 (DSNVSGKIGLR) are cytoplasmic. Residues 94-114 (AVVYYFSTTVIAVILGIVLVV) form a helical membrane-spanning segment. Na(+) is bound by residues tyrosine 98, threonine 101, and threonine 102. The Extracellular portion of the chain corresponds to 115 to 204 (SIKPGVTQKV…KTKEYKIVGL (90 aa)). Asparagine 128, asparagine 178, and asparagine 194 each carry an N-linked (GlcNAc...) asparagine glycan. Residues 205–228 (YSDGINVLGLIIFCLVFGLVIGKM) form a helical membrane-spanning segment. Over 229–237 (GEKGQILVD) the chain is Cytoplasmic. The helical transmembrane segment at 238-265 (FFNALSDATMKIVQIIMCYMPIGILFLI) threads the bilayer. The Extracellular portion of the chain corresponds to 266-285 (AGKIIEVEDWEIFRKLGLYM). A helical membrane pass occupies residues 286–307 (ATVLSGLAIHSLIVLPLLYFIV). Residues 308–312 (VRKNP) are Cytoplasmic-facing. Positions 313–343 (FRFALGMAQALLTALMISSSSATLPVTFRCA) form an intramembrane region, discontinuously helical. 2 residues coordinate L-aspartate: serine 330 and serine 332. Over 344 to 352 (EEKNQVDKR) the chain is Cytoplasmic. The helical transmembrane segment at 353-379 (ITRFVLPVGATINMDGTALYEAVAAVF) threads the bilayer. Positions 361, 363, 365, and 367 each coordinate Na(+). Threonine 369 serves as a coordination point for L-aspartate. Residues 380-392 (IAQLNGLDLSIGQ) lie on the Extracellular side of the membrane. Positions 393 to 426 (IVTISITATAASIGAAGVPQAGLVTMVIVLSAVG) form an intramembrane region, discontinuously helical. Serine 404, isoleucine 405, and alanine 407 together coordinate Na(+). Valine 410 contacts L-aspartate. Residues 427 to 439 (LPAEDVTLIIAVD) are Extracellular-facing. A helical membrane pass occupies residues 440–461 (WLLDRFRTMVNVLGDAFGTGIV). The L-aspartate site is built by arginine 446, threonine 447, and asparagine 450. The Na(+) site is built by asparagine 450 and aspartate 454. Residues 462 to 523 (EKLSKKELEQ…TISFTQTSQF (62 aa)) lie on the Cytoplasmic side of the membrane. Phosphoserine is present on residues serine 516 and serine 521.

This sequence belongs to the dicarboxylate/amino acid:cation symporter (DAACS) (TC 2.A.23) family. SLC1A1 subfamily. As to quaternary structure, homotrimer. Interacts with ARL6IP5. Interacts with RTN2 (via N-terminus); the interaction promotes cell surface expression of SLC1A1. Interacts with SORCS2; this interaction is important for normal expression at the cell membrane. Detected on neurons in the brain cortex, dentate gyrus and hippocampus CA2 region (at protein level). Expressed in whole brain, brain cortex, hippocampus, cerebellum, lung, kidney, small intestine and skeletal muscle. Expressed in the renal outer medulla, medullary ray and cortex (at protein level).

The protein resides in the cell membrane. Its subcellular location is the apical cell membrane. It localises to the synapse. The protein localises to the synaptosome. It is found in the early endosome membrane. The protein resides in the late endosome membrane. Its subcellular location is the recycling endosome membrane. The enzyme catalyses K(+)(in) + L-glutamate(out) + 3 Na(+)(out) + H(+)(out) = K(+)(out) + L-glutamate(in) + 3 Na(+)(in) + H(+)(in). It catalyses the reaction K(+)(in) + L-aspartate(out) + 3 Na(+)(out) + H(+)(out) = K(+)(out) + L-aspartate(in) + 3 Na(+)(in) + H(+)(in). The catalysed reaction is D-aspartate(out) + K(+)(in) + 3 Na(+)(out) + H(+)(out) = D-aspartate(in) + K(+)(out) + 3 Na(+)(in) + H(+)(in). It carries out the reaction K(+)(in) + L-cysteine(out) + 3 Na(+)(out) + H(+)(out) = K(+)(out) + L-cysteine(in) + 3 Na(+)(in) + H(+)(in). Functionally, sodium-dependent, high-affinity amino acid transporter that mediates the uptake of L-glutamate and also L-aspartate and D-aspartate. Can also transport L-cysteine. Functions as a symporter that transports one amino acid molecule together with two or three Na(+) ions and one proton, in parallel with the counter-transport of one K(+) ion. Mediates Cl(-) flux that is not coupled to amino acid transport; this avoids the accumulation of negative charges due to aspartate and Na(+) symport. Plays an important role in L-glutamate and L-aspartate reabsorption in renal tubuli. Plays a redundant role in the rapid removal of released glutamate from the synaptic cleft, which is essential for terminating the postsynaptic action of glutamate. Contributes to glutathione biosynthesis and protection against oxidative stress via its role in L-glutamate and L-cysteine transport. Negatively regulated by ARL6IP5. This is Excitatory amino acid transporter 3 (Slc1a1) from Mus musculus (Mouse).